A 270-amino-acid polypeptide reads, in one-letter code: 3-methyl-2-oxobutanoate hydroxymethyltransferase (270 aa).

Residues aspartate 50 and aspartate 89 each contribute to the Mg(2+) site. Residues 50 to 51 (DS), aspartate 89, and lysine 118 each bind 3-methyl-2-oxobutanoate. Glutamate 120 serves as a coordination point for Mg(2+). Glutamate 187 (proton acceptor) is an active-site residue.

It belongs to the PanB family. Homodecamer; pentamer of dimers. Requires Mg(2+) as cofactor.

Its subcellular location is the cytoplasm. It catalyses the reaction 3-methyl-2-oxobutanoate + (6R)-5,10-methylene-5,6,7,8-tetrahydrofolate + H2O = 2-dehydropantoate + (6S)-5,6,7,8-tetrahydrofolate. Its pathway is cofactor biosynthesis; (R)-pantothenate biosynthesis; (R)-pantoate from 3-methyl-2-oxobutanoate: step 1/2. Its function is as follows. Catalyzes the reversible reaction in which hydroxymethyl group from 5,10-methylenetetrahydrofolate is transferred onto alpha-ketoisovalerate to form ketopantoate. The sequence is that of 3-methyl-2-oxobutanoate hydroxymethyltransferase from Helicobacter acinonychis (strain Sheeba).